The primary structure comprises 498 residues: Argininosuccinate lyase 1 (498 aa).

Belongs to the lyase 1 family. Argininosuccinate lyase subfamily.

Its subcellular location is the cytoplasm. It carries out the reaction 2-(N(omega)-L-arginino)succinate = fumarate + L-arginine. Its pathway is amino-acid biosynthesis; L-arginine biosynthesis; L-arginine from L-ornithine and carbamoyl phosphate: step 3/3. This is Argininosuccinate lyase 1 from Shouchella clausii (strain KSM-K16) (Alkalihalobacillus clausii).